Here is a 271-residue protein sequence, read N- to C-terminus: UPF0328 protein ECU09_0020 (271 aa).

It belongs to the UPF0328 family.

This chain is UPF0328 protein ECU09_0020, found in Encephalitozoon cuniculi (strain GB-M1) (Microsporidian parasite).